A 147-amino-acid polypeptide reads, in one-letter code: Large ribosomal subunit protein bL9 (147 aa).

This sequence belongs to the bacterial ribosomal protein bL9 family.

Its function is as follows. Binds to the 23S rRNA. This is Large ribosomal subunit protein bL9 from Phocaeicola vulgatus (strain ATCC 8482 / DSM 1447 / JCM 5826 / CCUG 4940 / NBRC 14291 / NCTC 11154) (Bacteroides vulgatus).